Here is a 516-residue protein sequence, read N- to C-terminus: Apolipoprotein N-acyltransferase (516 aa).

6 consecutive transmembrane segments (helical) span residues 24-44 (LAQA…LLYL), 58-78 (GWCY…ISIH), 90-110 (LLTL…AWLW), 125-145 (LAFA…LTGF), 163-183 (APLG…ALLV), and 192-212 (PPAL…GLAL). The region spanning 230 to 471 (VQGNVEQNLK…RAVLYGEVTP (242 aa)) is the CN hydrolase domain. The active-site Proton acceptor is Glu-270. Residue Lys-331 is part of the active site. Cys-383 (nucleophile) is an active-site residue. A helical membrane pass occupies residues 479-499 (LRWRAWPLAGLAVLLLGWALL).

Belongs to the CN hydrolase family. Apolipoprotein N-acyltransferase subfamily.

It localises to the cell inner membrane. The catalysed reaction is N-terminal S-1,2-diacyl-sn-glyceryl-L-cysteinyl-[lipoprotein] + a glycerophospholipid = N-acyl-S-1,2-diacyl-sn-glyceryl-L-cysteinyl-[lipoprotein] + a 2-acyl-sn-glycero-3-phospholipid + H(+). Its pathway is protein modification; lipoprotein biosynthesis (N-acyl transfer). In terms of biological role, catalyzes the phospholipid dependent N-acylation of the N-terminal cysteine of apolipoprotein, the last step in lipoprotein maturation. In Azotobacter vinelandii (strain DJ / ATCC BAA-1303), this protein is Apolipoprotein N-acyltransferase.